A 520-amino-acid chain; its full sequence is Diacylglycerol O-acyltransferase 1 (520 aa).

Disordered stretches follow at residues 28 to 57 and 72 to 116; these read RRKSRSDSSNGLLLSGSDNNSPSDDVGAPA and QGTA…AHRR. The span at 34 to 54 shows a compositional bias: low complexity; that stretch reads DSSNGLLLSGSDNNSPSDDVG. Over residues 81 to 98 the composition is skewed to gly residues; sequence NNGGGDNNGGGRGGGEGR. Transmembrane regions (helical) follow at residues 126 to 146, 176 to 196, 207 to 227, 233 to 253, 276 to 296, 317 to 337, and 365 to 385; these read AIFKQSHAGLFNLCVVVLIAV, WPLFMCCISLSIFPLAAFTVE, PVVIFLHIIITMTEVLYPVYV, SAFLSGVTLMLLTCIVWLKLV, VSYYVSLKSLAYFMVAPTLCY, KLVIFTGFMGFIIEQYINPIV, and VWLCMFYCFFHLWLNILAELL. The FYXDWWN motif signature appears at 392–398; the sequence is FYKDWWN. Transmembrane regions (helical) follow at residues 434-454, 457-477, and 487-507; these read LAIIIAFLVSAVFHELCIAVP, LFKLWAFLGIMFQVPLVFITN, and VGNMIFWFIFCIFGQPMCVLL. Residue H447 is part of the active site.

This sequence belongs to the membrane-bound acyltransferase family. Sterol o-acyltransferase subfamily. Interacts with LPCAT2 and LPAT2. Ubiquitous. Highest expression in young developing seeds.

It localises to the plastid. It is found in the chloroplast membrane. Its subcellular location is the endoplasmic reticulum membrane. It catalyses the reaction an acyl-CoA + a 1,2-diacyl-sn-glycerol = a triacyl-sn-glycerol + CoA. The enzyme catalyses 1,2-di-(9Z-octadecenoyl)-sn-glycerol + (9Z)-octadecenoyl-CoA = 1,2,3-tri-(9Z-octadecenoyl)-glycerol + CoA. It participates in glycerolipid metabolism; triacylglycerol biosynthesis. Its activity is regulated as follows. Partially inhibited by niacin. In terms of biological role, major contributor to triacylglycerol (TAG) synthesis and oil accumulation in seeds. Catalyzes the acylation of the sn-3 hydroxy group of sn-1,2-diacylglycerol using acyl-CoA. Can use palmitoyl-CoA and oleoyl-CoA as substrates. Can use oleoyl-CoA and linoleoyl-CoA as substrates. Has substrate preference for oleoyl-CoA compared to linoleoyl-CoA. Has complementary functions with PDAT1 that are essential for triacylglycerol synthesis and normal development of both seeds and pollen. This is Diacylglycerol O-acyltransferase 1 from Arabidopsis thaliana (Mouse-ear cress).